We begin with the raw amino-acid sequence, 344 residues long: Uroporphyrinogen decarboxylase (344 aa).

Residues 26-30, Asp-76, Tyr-152, Ser-207, and His-323 each bind substrate; that span reads RQAGR.

This sequence belongs to the uroporphyrinogen decarboxylase family. Homodimer.

It localises to the cytoplasm. The enzyme catalyses uroporphyrinogen III + 4 H(+) = coproporphyrinogen III + 4 CO2. It functions in the pathway porphyrin-containing compound metabolism; protoporphyrin-IX biosynthesis; coproporphyrinogen-III from 5-aminolevulinate: step 4/4. Functionally, catalyzes the decarboxylation of four acetate groups of uroporphyrinogen-III to yield coproporphyrinogen-III. This is Uroporphyrinogen decarboxylase from Hyphomonas neptunium (strain ATCC 15444).